A 142-amino-acid polypeptide reads, in one-letter code: Large ribosomal subunit protein uL13 (142 aa).

This sequence belongs to the universal ribosomal protein uL13 family. Part of the 50S ribosomal subunit.

Functionally, this protein is one of the early assembly proteins of the 50S ribosomal subunit, although it is not seen to bind rRNA by itself. It is important during the early stages of 50S assembly. The polypeptide is Large ribosomal subunit protein uL13 (Aromatoleum aromaticum (strain DSM 19018 / LMG 30748 / EbN1) (Azoarcus sp. (strain EbN1))).